The following is a 94-amino-acid chain: Integration host factor subunit beta (94 aa).

This sequence belongs to the bacterial histone-like protein family. Heterodimer of an alpha and a beta chain.

This protein is one of the two subunits of integration host factor, a specific DNA-binding protein that functions in genetic recombination as well as in transcriptional and translational control. This Sodalis glossinidius (strain morsitans) protein is Integration host factor subunit beta.